Here is a 75-residue protein sequence, read N- to C-terminus: Protein B (75 aa).

The chain is Protein B from Dicentrarchus labrax (European seabass).